A 205-amino-acid polypeptide reads, in one-letter code: MIKYSNLVIPKTKSILKSGCNNNIGYGDRYFFNKLFGSNDASDTHNQPTTKIVTKEMTKELKYPVNQVYSVIIKVEDYKEFLPFCLNSTILKREKDKNHFEAELEVGQGTIKESYVSKVVYKENKFIESTATDTPLFHKLINTWSFKQGQTPNTTIAHCKLIYQFKSPFYATLMENFFASSLDVMINSFDKRCDELYGSSNSFKK.

Belongs to the COQ10 family. Interacts with coenzyme Q.

Its subcellular location is the mitochondrion inner membrane. In terms of biological role, required for the function of coenzyme Q in the respiratory chain. May serve as a chaperone or may be involved in the transport of Q6 from its site of synthesis to the catalytic sites of the respiratory complexes. The polypeptide is Coenzyme Q-binding protein COQ10, mitochondrial (coq10-1) (Dictyostelium discoideum (Social amoeba)).